We begin with the raw amino-acid sequence, 231 residues long: 5'-methylthioadenosine/S-adenosylhomocysteine nucleosidase (231 aa).

Catalysis depends on Glu-12, which acts as the Proton acceptor. Substrate contacts are provided by residues Gly-78, Met-153, and 174–175; that span reads ME. The active-site Proton donor is Asp-198.

This sequence belongs to the PNP/UDP phosphorylase family. MtnN subfamily.

It catalyses the reaction S-adenosyl-L-homocysteine + H2O = S-(5-deoxy-D-ribos-5-yl)-L-homocysteine + adenine. The catalysed reaction is S-methyl-5'-thioadenosine + H2O = 5-(methylsulfanyl)-D-ribose + adenine. The enzyme catalyses 5'-deoxyadenosine + H2O = 5-deoxy-D-ribose + adenine. It participates in amino-acid biosynthesis; L-methionine biosynthesis via salvage pathway; S-methyl-5-thio-alpha-D-ribose 1-phosphate from S-methyl-5'-thioadenosine (hydrolase route): step 1/2. In terms of biological role, catalyzes the irreversible cleavage of the glycosidic bond in both 5'-methylthioadenosine (MTA) and S-adenosylhomocysteine (SAH/AdoHcy) to adenine and the corresponding thioribose, 5'-methylthioribose and S-ribosylhomocysteine, respectively. Also cleaves 5'-deoxyadenosine, a toxic by-product of radical S-adenosylmethionine (SAM) enzymes, into 5-deoxyribose and adenine. This chain is 5'-methylthioadenosine/S-adenosylhomocysteine nucleosidase, found in Bacillus cytotoxicus (strain DSM 22905 / CIP 110041 / 391-98 / NVH 391-98).